The primary structure comprises 130 residues: Small ribosomal subunit protein uS11 (130 aa).

The tract at residues 109 to 130 (EDVTPIPHDGTGRPGGKRGRRV) is disordered.

The protein belongs to the universal ribosomal protein uS11 family. Part of the 30S ribosomal subunit.

Located on the platform of the 30S subunit. The polypeptide is Small ribosomal subunit protein uS11 (Methanosphaera stadtmanae (strain ATCC 43021 / DSM 3091 / JCM 11832 / MCB-3)).